We begin with the raw amino-acid sequence, 190 residues long: NADH-quinone oxidoreductase subunit B (190 aa).

C39, C40, C104, and C135 together coordinate [4Fe-4S] cluster.

It belongs to the complex I 20 kDa subunit family. In terms of assembly, NDH-1 is composed of 14 different subunits. Subunits NuoB, C, D, E, F, and G constitute the peripheral sector of the complex. [4Fe-4S] cluster is required as a cofactor.

It is found in the cell inner membrane. It catalyses the reaction a quinone + NADH + 5 H(+)(in) = a quinol + NAD(+) + 4 H(+)(out). Functionally, NDH-1 shuttles electrons from NADH, via FMN and iron-sulfur (Fe-S) centers, to quinones in the respiratory chain. The immediate electron acceptor for the enzyme in this species is believed to be a menaquinone. Couples the redox reaction to proton translocation (for every two electrons transferred, four hydrogen ions are translocated across the cytoplasmic membrane), and thus conserves the redox energy in a proton gradient. The polypeptide is NADH-quinone oxidoreductase subunit B (Prosthecochloris aestuarii (strain DSM 271 / SK 413)).